A 164-amino-acid chain; its full sequence is Lipoprotein signal peptidase (164 aa).

Transmembrane regions (helical) follow at residues Trp-12–Gln-32, Trp-70–Leu-90, and Ala-102–Val-122. Active-site residues include Asp-123 and Asp-141. Residues Phe-137–Leu-157 form a helical membrane-spanning segment.

Belongs to the peptidase A8 family.

It is found in the cell inner membrane. It catalyses the reaction Release of signal peptides from bacterial membrane prolipoproteins. Hydrolyzes -Xaa-Yaa-Zaa-|-(S,diacylglyceryl)Cys-, in which Xaa is hydrophobic (preferably Leu), and Yaa (Ala or Ser) and Zaa (Gly or Ala) have small, neutral side chains.. The protein operates within protein modification; lipoprotein biosynthesis (signal peptide cleavage). In terms of biological role, this protein specifically catalyzes the removal of signal peptides from prolipoproteins. In Shigella boydii serotype 4 (strain Sb227), this protein is Lipoprotein signal peptidase.